The sequence spans 201 residues: Casparian strip membrane protein 4 (201 aa).

The segment at 1-23 (MEGKAAVTTSTEHGDGEASRTAA) is disordered. Over 1 to 41 (MEGKAAVTTSTEHGDGEASRTAARTVVSGSSRGGAASRALS) the chain is Cytoplasmic. A helical transmembrane segment spans residues 42-62 (VADLILRVVAVVAIVDSAIAM). Over 63–87 (GTTNQTLPFFTQFLRFKAQYSDLPT) the chain is Extracellular. N66 carries N-linked (GlcNAc...) asparagine glycosylation. Residues 88–108 (LTLFVVANSAVTAYLVLSIPL) form a helical membrane-spanning segment. Topologically, residues 109–122 (SVVHIIRSRASYSR) are cytoplasmic. Residues 123 to 143 (LVLIFLDSVMLALVAAVASAS) traverse the membrane as a helical segment. At 144-172 (AAIVYLAHKGNVRANWFAVCQQFDSFCER) the chain is on the extracellular side. Residues 173 to 193 (ISGPLIGSFAAMAVLLLLVLL) form a helical membrane-spanning segment. The Cytoplasmic portion of the chain corresponds to 194–201 (SAAALARR).

It belongs to the Casparian strip membrane proteins (CASP) family. In terms of assembly, homodimer and heterodimers.

The protein resides in the cell membrane. Its function is as follows. Regulates membrane-cell wall junctions and localized cell wall deposition. Required for establishment of the Casparian strip membrane domain (CSD) and the subsequent formation of Casparian strips, a cell wall modification of the root endodermis that determines an apoplastic barrier between the intraorganismal apoplasm and the extraorganismal apoplasm and prevents lateral diffusion. The protein is Casparian strip membrane protein 4 of Oryza sativa subsp. japonica (Rice).